We begin with the raw amino-acid sequence, 278 residues long: Replication protein A 32 kDa subunit B (278 aa).

The OB DNA-binding region spans 70-143; it reads VVIVGRISRM…RSVNVFSVRP (74 aa).

The protein belongs to the replication factor A protein 2 family. Heterotrimer of RPA1, RPA2 and RPA3 (canonical replication protein A complex). Phosphorylated in a cell-cycle-dependent manner (from the S phase until mitosis). In response to DNA damage, recruited to DNA-repair nuclear foci, as a hypophosphorylated form.

It localises to the nucleus. Component of the replication protein A complex (RPA) required for DNA recombination, repair and replication. The activity of RPA is mediated by single-stranded DNA binding and protein interactions. Required fo cell division in meristems. Involved in the maintenance of transcriptional epigenetic gene silencing (TGS) at specific loci (including some transposons) by regulating histone H3 acetylation, 'Lys-4' and 'Lys-9' methylation. In Arabidopsis thaliana (Mouse-ear cress), this protein is Replication protein A 32 kDa subunit B (RPA2B).